We begin with the raw amino-acid sequence, 341 residues long: Abnormal cell lineage protein 44 (341 aa).

A signal peptide spans 1–21 (MRALYFRTTTLSTFFILCSLA). 11 cysteine pairs are disulfide-bonded: C84/C95, C134/C142, C144/C158, C206/C220, C208/C215, C265/C292, C275/C287, C291/C331, C307/C322, C309/C319, and C314/C315. Residue S212 is the site of O-palmitoleoyl serine; by mom-1 attachment. An N-linked (GlcNAc...) asparagine glycan is attached at N279.

Belongs to the Wnt family. In terms of processing, palmitoleoylation is required for efficient binding to frizzled receptors. Depalmitoleoylation leads to Wnt signaling pathway inhibition.

The protein resides in the secreted. Its subcellular location is the extracellular space. It localises to the extracellular matrix. In terms of biological role, ligand for members of the frizzled family of seven transmembrane receptors. Affects male tail development, vulval precursor cell specification and egg laying. Involved in morphogenesis by influencing polarity of asymmetric cell divisions of the B, U, and F cells in the male, and the T cell in males and hermaphrodites. Controls spindle orientation in B-gamma cell division during male copulatory spicule development. Involved in specification of the P7.p lineage during vulval development. Has a role in providing polarity and default lin-17 localization in axon development and positioning of neuromuscular synapses in DA9 regions by negatively regulating synaptogenesis. The protein is Abnormal cell lineage protein 44 of Caenorhabditis briggsae.